The primary structure comprises 553 residues: MVQRLWVSRLLRHRKAQLLLINLLTFGLEVCLAAGITYVPPLLLEVGVEEKFMTMVLGIGPVLGLVSVPLLGSASDHWRGRYGRRRPFIWALSLGILLSLFLIPRAGWLAGLLCPDPRPLELALLILGVGLLDFCGQVCFTPLEALLSDLFRDPDHCRQAYSVYAFMISLGGCLGYLLPAIDWDTSALAPYLGTQEECLFGLLTLIFLTCVAATLLVAEEAALGPAEPAEGLSAPSLPSHCCPCWARLAFRNLGALLPRLHQLCCRMPRTLRRLFVAELCSWMALMTFTLFYTDFVGEGLYQGVPRAELGTEARRHYDEGVRMGSLGLFLQCAISLVFSLVMDRLVQRFGTRAVYLASVAAFPVAAGATCLSHSVAVVTASAALTGFTFSALQILPYTLASLYHRERQVFLPKYRGDAGGTSSEDSLMTSFLPGPKPGAPFPNGHVGAGGSGLLPPPPALCGASACDVSVRVVVGEPTEARVVPGRGICLDLAILDSAFLLSQVAPSLFMGSIVQLSQSVTAYMVSAAGLGLVAIYFATQVVFDKSDLAKYSV.

11 helical membrane-spanning segments follow: residues 19–39 (LLIN…ITYV), 52–72 (FMTM…PLLG), 88–108 (FIWA…RAGW), 120–140 (LELA…QVCF), 161–181 (YSVY…LPAI), 198–218 (CLFG…LLVA), 275–295 (FVAE…YTDF), 323–343 (MGSL…LVMD), 353–373 (AVYL…CLSH), 382–402 (AALT…LASL), and 522–542 (AYMV…TQVV).

It belongs to the glycoside-pentoside-hexuronide (GPH) cation symporter transporter (TC 2.A.2) family.

The protein localises to the membrane. It carries out the reaction sucrose(out) + H(+)(out) = sucrose(in) + H(+)(in). Its function is as follows. Proton-associated sucrose transporter. May be able to transport also glucose and fructose. This Macaca fascicularis (Crab-eating macaque) protein is Solute carrier family 45 member 3 (SLC45A3).